The following is a 351-amino-acid chain: Protein-glutamate methylesterase/protein-glutamine glutaminase (351 aa).

The 118-residue stretch at 3-120 folds into the Response regulatory domain; it reads KTLVVDDSAL…EISKIENELV (118 aa). Asp54 is subject to 4-aspartylphosphate. In terms of domain architecture, CheB-type methylesterase spans 160–347; the sequence is ILIGSSTGGP…EQIVRMIEVK (188 aa). Catalysis depends on residues Ser165, His192, and Asp289.

It belongs to the CheB family. Phosphorylated by CheA. Phosphorylation of the N-terminal regulatory domain activates the methylesterase activity.

The protein resides in the cytoplasm. The catalysed reaction is [protein]-L-glutamate 5-O-methyl ester + H2O = L-glutamyl-[protein] + methanol + H(+). It catalyses the reaction L-glutaminyl-[protein] + H2O = L-glutamyl-[protein] + NH4(+). Involved in chemotaxis. Part of a chemotaxis signal transduction system that modulates chemotaxis in response to various stimuli. Catalyzes the demethylation of specific methylglutamate residues introduced into the chemoreceptors (methyl-accepting chemotaxis proteins or MCP) by CheR. Also mediates the irreversible deamidation of specific glutamine residues to glutamic acid. This is Protein-glutamate methylesterase/protein-glutamine glutaminase from Methanococcoides burtonii (strain DSM 6242 / NBRC 107633 / OCM 468 / ACE-M).